A 291-amino-acid chain; its full sequence is ATP synthase gamma chain (291 aa).

This sequence belongs to the ATPase gamma chain family. In terms of assembly, F-type ATPases have 2 components, CF(1) - the catalytic core - and CF(0) - the membrane proton channel. CF(1) has five subunits: alpha(3), beta(3), gamma(1), delta(1), epsilon(1). CF(0) has three main subunits: a, b and c.

It is found in the cell membrane. Produces ATP from ADP in the presence of a proton gradient across the membrane. The gamma chain is believed to be important in regulating ATPase activity and the flow of protons through the CF(0) complex. The polypeptide is ATP synthase gamma chain (Streptococcus equi subsp. equi (strain 4047)).